The primary structure comprises 331 residues: MSGENVTRVGTFILVGFPTAPGLQYLLFLLFLLTYLFVLVENLAIILTVWSSTSLHRPMYYFLSSMSFLEIWYVSDITPKMLEGFLLQQKRISFVGCMTQLYFFSSLVCTECVLLASMAYDRYVAICHPLRYHVLVTPGLCLQLVGFSFVSGFTISMIKVCFISSVTFCGSNVLNHFFCDISPILKLACTDFSTAELVDFILAFIILVFPLLATMLSYAHITLAVLRIPSATGCWRAFFTCASHLTVVTVFYTALLFMYVRPQAIDSRSSNKLISVLYTVITPILNPLIYCLRNKEFKNALKKAFGLTSCAVEGRLSSLLELHLQIHSQPL.

The Extracellular segment spans residues 1–25 (MSGENVTRVGTFILVGFPTAPGLQY). The N-linked (GlcNAc...) asparagine glycan is linked to asparagine 5. A helical transmembrane segment spans residues 26–46 (LLFLLFLLTYLFVLVENLAII). Over 47 to 54 (LTVWSSTS) the chain is Cytoplasmic. Residues 55–75 (LHRPMYYFLSSMSFLEIWYVS) traverse the membrane as a helical segment. Over 76-99 (DITPKMLEGFLLQQKRISFVGCMT) the chain is Extracellular. A disulfide bridge connects residues cysteine 97 and cysteine 189. The helical transmembrane segment at 100-120 (QLYFFSSLVCTECVLLASMAY) threads the bilayer. Over 121 to 139 (DRYVAICHPLRYHVLVTPG) the chain is Cytoplasmic. A helical transmembrane segment spans residues 140 to 160 (LCLQLVGFSFVSGFTISMIKV). Residues 161–196 (CFISSVTFCGSNVLNHFFCDISPILKLACTDFSTAE) are Extracellular-facing. Residues 197 to 217 (LVDFILAFIILVFPLLATMLS) traverse the membrane as a helical segment. Residues 218-237 (YAHITLAVLRIPSATGCWRA) lie on the Cytoplasmic side of the membrane. A helical transmembrane segment spans residues 238-258 (FFTCASHLTVVTVFYTALLFM). At 259-271 (YVRPQAIDSRSSN) the chain is on the extracellular side. The chain crosses the membrane as a helical span at residues 272 to 292 (KLISVLYTVITPILNPLIYCL). The Cytoplasmic segment spans residues 293 to 331 (RNKEFKNALKKAFGLTSCAVEGRLSSLLELHLQIHSQPL).

The protein belongs to the G-protein coupled receptor 1 family.

The protein resides in the cell membrane. In terms of biological role, odorant receptor. In Homo sapiens (Human), this protein is Olfactory receptor 6B3 (OR6B3).